A 682-amino-acid chain; its full sequence is Probable glycosyl transferase Gly (682 aa).

Residues 21–26 (CASFSD) and 112–113 (DC) contribute to the UDP site. 3 residues coordinate Mn(2+): Asp112, Asp114, and His230. 230-236 (HYLPERK) contacts UDP.

The protein belongs to the glycosyltransferase 8 family. In terms of assembly, part of the accessory SecA2/SecY2 protein translocation apparatus required to export cell wall protein GspB.

Its function is as follows. Part of the accessory SecA2/SecY2 system specifically required to export GspB, a serine-rich repeat cell wall protein encoded upstream in the same operon. This Streptococcus gordonii protein is Probable glycosyl transferase Gly (gly).